The chain runs to 130 residues: uncharacterized protein (130 aa).

N-linked (GlcNAc...) asparagine glycosylation is present at Asn102. The chain crosses the membrane as a helical span at residues 110–130 (DPLAFYLMFLIIITILLIMIL).

The protein resides in the membrane. This is an uncharacterized protein from Dictyostelium discoideum (Social amoeba).